We begin with the raw amino-acid sequence, 261 residues long: Kallikrein 1-related peptidase b8 (261 aa).

Residues 1 to 18 form the signal peptide; the sequence is MRFLILFLALSLGGIDAA. A propeptide spans 19-24 (activation peptide); the sequence is PPLQSR. The Peptidase S1 domain occupies 25-258; that stretch reads VVGGFNCEKN…FNSWIKDTMT (234 aa). Intrachain disulfides connect cysteine 31–cysteine 173, cysteine 50–cysteine 66, cysteine 152–cysteine 219, cysteine 184–cysteine 198, and cysteine 209–cysteine 234. The active-site Charge relay system is the histidine 65. Asparagine 102 carries an N-linked (GlcNAc...) asparagine glycan. Aspartate 120 functions as the Charge relay system in the catalytic mechanism. The active-site Charge relay system is serine 213.

This sequence belongs to the peptidase S1 family. Kallikrein subfamily.

It carries out the reaction Preferential cleavage of Arg-|-Xaa bonds in small molecule substrates. Highly selective action to release kallidin (lysyl-bradykinin) from kininogen involves hydrolysis of Met-|-Xaa or Leu-|-Xaa.. Its function is as follows. Glandular kallikreins cleave Met-Lys and Arg-Ser bonds in kininogen to release Lys-bradykinin. In Mus musculus (Mouse), this protein is Kallikrein 1-related peptidase b8 (Klk1b8).